Here is a 376-residue protein sequence, read N- to C-terminus: Queuine tRNA-ribosyltransferase (376 aa).

The active-site Proton acceptor is Asp-89. Substrate-binding positions include 89–93 (DSGGF), Asp-143, Gln-194, and Gly-221. An RNA binding region spans residues 252–258 (GVGIPSN). Asp-271 (nucleophile) is an active-site residue. The tract at residues 276-280 (ARNGR) is RNA binding; important for wobble base 34 recognition. Positions 309, 311, 314, and 340 each coordinate Zn(2+).

The protein belongs to the queuine tRNA-ribosyltransferase family. As to quaternary structure, homodimer. Within each dimer, one monomer is responsible for RNA recognition and catalysis, while the other monomer binds to the replacement base PreQ1. It depends on Zn(2+) as a cofactor.

It carries out the reaction 7-aminomethyl-7-carbaguanine + guanosine(34) in tRNA = 7-aminomethyl-7-carbaguanosine(34) in tRNA + guanine. It participates in tRNA modification; tRNA-queuosine biosynthesis. Functionally, catalyzes the base-exchange of a guanine (G) residue with the queuine precursor 7-aminomethyl-7-deazaguanine (PreQ1) at position 34 (anticodon wobble position) in tRNAs with GU(N) anticodons (tRNA-Asp, -Asn, -His and -Tyr). Catalysis occurs through a double-displacement mechanism. The nucleophile active site attacks the C1' of nucleotide 34 to detach the guanine base from the RNA, forming a covalent enzyme-RNA intermediate. The proton acceptor active site deprotonates the incoming PreQ1, allowing a nucleophilic attack on the C1' of the ribose to form the product. After dissociation, two additional enzymatic reactions on the tRNA convert PreQ1 to queuine (Q), resulting in the hypermodified nucleoside queuosine (7-(((4,5-cis-dihydroxy-2-cyclopenten-1-yl)amino)methyl)-7-deazaguanosine). This is Queuine tRNA-ribosyltransferase from Clostridium botulinum (strain Kyoto / Type A2).